The sequence spans 312 residues: Olfactory receptor 6C74 (312 aa).

Residues methionine 1–valine 23 are Extracellular-facing. Asparagine 3 is a glycosylation site (N-linked (GlcNAc...) asparagine). Residues isoleucine 24–isoleucine 44 form a helical membrane-spanning segment. At threonine 45–asparagine 63 the chain is on the cytoplasmic side. Residues phenylalanine 64–alanine 84 traverse the membrane as a helical segment. The Extracellular segment spans residues threonine 85–cysteine 95. A disulfide bond links cysteine 95 and cysteine 177. A helical transmembrane segment spans residues alanine 96 to methionine 116. Residues serine 117–serine 140 are Cytoplasmic-facing. The chain crosses the membrane as a helical span at residues leucine 141 to glycine 161. The Extracellular segment spans residues leucine 162–glutamate 194. The chain crosses the membrane as a helical span at residues leucine 195–serine 215. Topologically, residues tyrosine 216–serine 237 are cytoplasmic. A helical transmembrane segment spans residues threonine 238–valine 258. The Extracellular segment spans residues lysine 259–asparagine 269. Residues lysine 270 to leucine 290 form a helical membrane-spanning segment. The Cytoplasmic segment spans residues arginine 291–lysine 312.

It belongs to the G-protein coupled receptor 1 family.

Its subcellular location is the cell membrane. Odorant receptor. The polypeptide is Olfactory receptor 6C74 (OR6C74) (Homo sapiens (Human)).